Here is a 413-residue protein sequence, read N- to C-terminus: DNA primase large subunit PriL (413 aa).

Positions 230, 301, 310, and 317 each coordinate [4Fe-4S] cluster. Basic and acidic residues-rich tracts occupy residues 340–356 (MEKEKEEKEEKEKQEEK), 362–381 (KEKQEEIKKKKKKEKQEEKG), and 388–413 (KKRERKQEKETKRREGKEKQEEKKRI). The tract at residues 340-413 (MEKEKEEKEE…KEKQEEKKRI (74 aa)) is disordered.

This sequence belongs to the eukaryotic-type primase large subunit family. As to quaternary structure, heterodimer of a small subunit (PriS) and a large subunit (PriL). [4Fe-4S] cluster is required as a cofactor.

Its function is as follows. Regulatory subunit of DNA primase, an RNA polymerase that catalyzes the synthesis of short RNA molecules used as primers for DNA polymerase during DNA replication. Stabilizes and modulates the activity of the small subunit, increasing the rate of DNA synthesis, and conferring RNA synthesis capability. The DNA polymerase activity may enable DNA primase to also catalyze primer extension after primer synthesis. May also play a role in DNA repair. The sequence is that of DNA primase large subunit PriL from Methanosarcina barkeri (strain Fusaro / DSM 804).